Reading from the N-terminus, the 149-residue chain is Transcriptional repressor NrdR (149 aa).

Residues cysteine 3–cysteine 34 fold into a zinc finger. Positions proline 49–glutamate 139 constitute an ATP-cone domain.

The protein belongs to the NrdR family. Requires Zn(2+) as cofactor.

Functionally, negatively regulates transcription of bacterial ribonucleotide reductase nrd genes and operons by binding to NrdR-boxes. This chain is Transcriptional repressor NrdR, found in Yersinia enterocolitica serotype O:8 / biotype 1B (strain NCTC 13174 / 8081).